We begin with the raw amino-acid sequence, 483 residues long: Regulatory protein ViaA (483 aa).

This sequence belongs to the ViaA family. As to quaternary structure, homodimer. Interacts with RavA.

The protein resides in the cytoplasm. Component of the RavA-ViaA chaperone complex, which may act on the membrane to optimize the function of some of the respiratory chains. ViaA stimulates the ATPase activity of RavA. The protein is Regulatory protein ViaA of Escherichia coli O81 (strain ED1a).